Here is a 459-residue protein sequence, read N- to C-terminus: ATP synthase subunit beta (459 aa).

148–155 (GGAGVGKT) contributes to the ATP binding site.

This sequence belongs to the ATPase alpha/beta chains family. In terms of assembly, F-type ATPases have 2 components, CF(1) - the catalytic core - and CF(0) - the membrane proton channel. CF(1) has five subunits: alpha(3), beta(3), gamma(1), delta(1), epsilon(1). CF(0) has three main subunits: a(1), b(2) and c(9-12). The alpha and beta chains form an alternating ring which encloses part of the gamma chain. CF(1) is attached to CF(0) by a central stalk formed by the gamma and epsilon chains, while a peripheral stalk is formed by the delta and b chains.

Its subcellular location is the cell inner membrane. The enzyme catalyses ATP + H2O + 4 H(+)(in) = ADP + phosphate + 5 H(+)(out). In terms of biological role, produces ATP from ADP in the presence of a proton gradient across the membrane. The catalytic sites are hosted primarily by the beta subunits. The polypeptide is ATP synthase subunit beta (Hahella chejuensis (strain KCTC 2396)).